A 597-amino-acid chain; its full sequence is Nuclear receptor subfamily 4 group A member 1 (597 aa).

Positions 1-22 (MPCIQAQYGTPATSPGPRDHLT) are disordered. The tract at residues 170–465 (RVWTEQLPKA…PGEGKLIFCS (296 aa)) is required for nuclear import. The nuclear receptor DNA-binding region spans 263–338 (EGRCAVCGDN…VGMVKEVVRT (76 aa)). 2 consecutive NR C4-type zinc fingers follow at residues 266–286 (CAVCGDNASCQHYGVRTCEGC) and 302–326 (CLANKDCPVDKRRRNRCQFCRFQKC). The interval 267 to 353 (AVCGDNASCQ…RRGRLPSKPK (87 aa)) is required for binding NBRE-containing DNA. Residues 298 to 360 (AKYICLANKD…KPKQPPDASP (63 aa)) form a required for the interaction with RXRA region. A Phosphoserine; by PKA modification is found at Ser340. The segment at 341-360 (LKGRRGRLPSKPKQPPDASP) is disordered. Residue Ser350 is modified to Phosphoserine; by PKA, RPS6KA1 and RPS6KA3. One can recognise an NR LBD domain in the interval 359–594 (SPTNLLTSLI…PIVDKIFMDT (236 aa)). A binds lipopolysaccharide region spans residues 520–543 (PRRVEELQNRIASCLKEHMAAVAG). The AF-2 stretch occupies residues 583–594 (PPPIVDKIFMDT).

This sequence belongs to the nuclear hormone receptor family. NR4 subfamily. As to quaternary structure, binds the NGFI-B response element (NBRE) as a monomer. Binds the Nur response element (NurRE), consisting of two inverse NBRE-related octanucleotide repeats separated by 6 base-pairs, as a dimer. Interacts (via N-terminus) with NLRP3 (via LRR repeat domain); the interaction is direct, requires binding of NR4A1/Nur77 to NBRE-containing dsDNA and lipopolysaccharide, and leads to non-canonical NLRP3 inflammasome activation. Interacts with GADD45GIP1. Interacts with STK11. Interacts with IFI27. Heterodimer (via DNA-binding domain) with RXRA (via C-terminus); DNA-binding of the heterodimer is enhanced by 9-cis retinoic acid. Competes for the RXRA interaction with EP300 and thereby attenuates EP300 mediated acetylation of RXRA. Interacts with NCOA1. Interacts with NCOA2. Interacts with NCOA3. Requires Zn(2+) as cofactor. In terms of processing, phosphorylated at Ser-350 by RPS6KA1 and RPS6KA3 in response to mitogenic or stress stimuli. Phosphorylation of Ser-350 results in decrease in NBRE binding while phosphorylation of Ser-340 has little effect on it. Post-translationally, acetylated by p300/CBP, acetylation increases stability. Deacetylated by HDAC1. Expressed in lung, brain and superior cervical ganglia. High levels are seen in the adrenal tissue.

It localises to the nucleus. It is found in the cytoplasm. The protein localises to the cytosol. The protein resides in the mitochondrion. Orphan nuclear receptor. Binds the NGFI-B response element (NBRE) 5'-AAAGGTCA-3'. Binds 9-cis-retinoic acid outside of its ligand-binding (NR LBD) domain. Participates in energy homeostasis by sequestrating the kinase STK11 in the nucleus, thereby attenuating cytoplasmic AMPK activation. Regulates the inflammatory response in macrophages by regulating metabolic adaptations during inflammation, including repressing the transcription of genes involved in the citric acid cycle (TCA). Inhibits NF-kappa-B signaling by binding to low-affinity NF-kappa-B binding sites, such as at the IL2 promoter. May act concomitantly with NR4A2 in regulating the expression of delayed-early genes during liver regeneration. Plays a role in the vascular response to injury. Functionally, in the cytosol, upon its detection of both bacterial lipopolysaccharide (LPS) and NBRE-containing mitochondrial DNA released by GSDMD pores during pyroptosis, it promotes non-canonical NLRP3 inflammasome activation by stimulating association of NLRP3 and NEK7. This Rattus norvegicus (Rat) protein is Nuclear receptor subfamily 4 group A member 1 (Nr4a1).